The primary structure comprises 185 residues: Dense granule protein 2 (185 aa).

An N-terminal signal peptide occupies residues 1–23 (MFAVKHCLLVVAVGALVNVSVRA). An N-linked (GlcNAc...) asparagine glycan is attached at Asn18. Disordered stretches follow at residues 41 to 75 (GKPL…SQRA) and 142 to 185 (ANVE…DFSQ). Residues 43–66 (PLDERAVGGKGEHTPPLPDERQQE) are compositionally biased toward basic and acidic residues.

In terms of processing, may also be O-glycosylated. The N-terminus is blocked.

The protein localises to the parasitophorous vacuole. Its function is as follows. Major granular component involved in excreted-secreted antigen (ESA) immunity. Possibly acts in conjunction with GRA1. This chain is Dense granule protein 2 (GRA2), found in Toxoplasma gondii.